We begin with the raw amino-acid sequence, 443 residues long: Monooxygenase asqM (443 aa).

This sequence belongs to the aromatic-ring hydroxylase family. Requires FAD as cofactor.

The protein operates within secondary metabolite biosynthesis. Its pathway is alkaloid biosynthesis. It participates in mycotoxin biosynthesis. Monooxygenase; part of the gene cluster that mediates the biosynthesis of the aspoquinolone mycotoxins. The role of asqM within the aspoquinolone pathway has still to be determined. The first step of the pathway is catalyzed by the nonribosomal peptide synthetase asqK that condenses anthranilic acid and O-methyl-L-tyrosine to produce 4'-methoxycyclopeptin. 4'-methoxycyclopeptin is then converted to 4'-methoxydehydrocyclopeptin by the ketoglutarate-dependent dioxygenase asqJ. AsqJ also converts its first product 4'-methoxydehydrocyclopeptin to 4'-methoxycyclopenin. The following conversion of 4'-methoxycyclopenin into 4'-methoxyviridicatin is catalyzed by the cyclopenase asqI. 4'-methoxyviridicatin is the precursor of quinolone natural products, and is further converted to quinolinone B. The prenyltransferase asqH1 then catalyzes the canonical Friedel-Crafts alkylation of quinolinone B with dimethylallyl cation to yield dimethylallyl quinolone, which is subjected to FAD-dependent dehydrogenation by the FAD-linked oxidoreductase asqF to yield conjugated aryl diene. The delta(3') double bond then serves as the site of the second alkylation with DMAPP catalyzed by the prenyltransferase asqH2 to yield a carbenium ion intermediate, which can be attacked by H(2)O to yield a styrenyl quinolone containing a C3'-hydroxyprenyl chain. The FAD-dependent monooxygenase asqG performs epoxidation of the terminal C7'-C8' olefin. Finally, after dehydratation of the epoxide at C3 by asqC, the quinolone epoxide rearrangement protein asqO catalyzes an enzymatic 3-exo-tet cyclization to yield the cyclopropyl-THF ring system in aspoquinolone. The protein is Monooxygenase asqM of Emericella nidulans (strain FGSC A4 / ATCC 38163 / CBS 112.46 / NRRL 194 / M139) (Aspergillus nidulans).